A 352-amino-acid polypeptide reads, in one-letter code: Coproporphyrin III ferrochelatase (352 aa).

Fe-coproporphyrin III contacts are provided by serine 52 and tyrosine 121. The Fe(2+) site is built by histidine 181 and glutamate 269.

This sequence belongs to the ferrochelatase family.

It localises to the cytoplasm. It carries out the reaction Fe-coproporphyrin III + 2 H(+) = coproporphyrin III + Fe(2+). The protein operates within porphyrin-containing compound metabolism; protoheme biosynthesis. Functionally, involved in coproporphyrin-dependent heme b biosynthesis. Catalyzes the insertion of ferrous iron into coproporphyrin III to form Fe-coproporphyrin III. The protein is Coproporphyrin III ferrochelatase of Nocardia farcinica (strain IFM 10152).